A 461-amino-acid polypeptide reads, in one-letter code: MLKEYRTVKEVVGPLMLVDQVESVSFDELVEIELHNGEKRRGRVLEINKDKALVQLFEGSAGINIKGAKVKFLGKPLELGVSEDMLGRVFDGLGNPKDGGPKIIPDEKRDISGIPINPVARNYPDEFIQTGVSAIDGLNTLVRGQKLPVFSGSGLPHAELAAQIARQAKVLNSDSKFAVVFAAIGTTFEEAQYFIDDFTKTGAIDRAVLFINLANDPAIERIATPRMALTAAEYLAFEKGMHVLVIMTDITNYCEALREVSAARKEVPGRRGYPGYLYTDLSTIYERAGRILGKEGSITQIPILTMPEDDKTHPIPDLTGYITEGQIILSRELYKKGIMPPIDVLPSLSRLKDKGIGKEKTREDHADTMNQLFAAYAQGKQAKELSVILGESALSDTDKLYAKFADAFEGEYVSQGFTTNRTIEETLNLGWKLLTILPKSELKRIRDEYLEKYLNKAEESK.

Belongs to the ATPase alpha/beta chains family.

Produces ATP from ADP in the presence of a proton gradient across the membrane. The V-type beta chain is a regulatory subunit. This chain is V-type ATP synthase beta chain, found in Clostridium botulinum (strain 657 / Type Ba4).